Consider the following 309-residue polypeptide: GTP cyclohydrolase MptA (309 aa).

This sequence belongs to the GTP cyclohydrolase IV family. As to quaternary structure, homodimer. Fe(2+) is required as a cofactor.

The catalysed reaction is GTP + H2O = 7,8-dihydroneopterin 2',3'-cyclic phosphate + formate + diphosphate + H(+). It participates in cofactor biosynthesis; 5,6,7,8-tetrahydromethanopterin biosynthesis. Its function is as follows. Converts GTP to 7,8-dihydro-D-neopterin 2',3'-cyclic phosphate, the first intermediate in the biosynthesis of coenzyme methanopterin. The protein is GTP cyclohydrolase MptA of Haloquadratum walsbyi (strain DSM 16790 / HBSQ001).